A 306-amino-acid chain; its full sequence is MASPSCLWLLAVALLPWTCAARALHHLDPPAPLPLVIWHGMGDSCCNPLSMGAIKKMVEKKIPGIYVLSLEIGKTLMEDVENSFFLNVNSQVTTVCQTLAKDPKLQQGYNAMGFSQGGQFLRAVAQRCPSPPMINLISVGGQHQGVFGLPRCPGESSHICDFIRKTLNAGAYSKVVQERLVQAEYWHDPIKEDVYRNHSIFLADINQERGINESYKKNLMALKKFVMVKFLNDSIVDPVDSEWFGFYRSGQAKETIPLQETSLYTQDRLGLKEMDNAGQLVFLATEGDHLQLSEEWFYAHIIPFLG.

The first 27 residues, 1-27 (MASPSCLWLLAVALLPWTCAARALHHL), serve as a signal peptide directing secretion. Intrachain disulfides connect Cys45–Cys46, Cys96–Cys128, and Cys152–Cys160. Ser115 is a catalytic residue. Residues Asn197, Asn212, and Asn232 are each glycosylated (N-linked (GlcNAc...) asparagine). Residues Asp233 and His289 contribute to the active site.

This sequence belongs to the palmitoyl-protein thioesterase family. As to quaternary structure, interacts with CLN5, ATP5F1A and ATP5F1B. In terms of processing, glycosylated.

Its subcellular location is the lysosome. The protein localises to the secreted. It localises to the golgi apparatus. It is found in the endoplasmic reticulum. The catalysed reaction is S-hexadecanoyl-L-cysteinyl-[protein] + H2O = L-cysteinyl-[protein] + hexadecanoate + H(+). It catalyses the reaction hexadecanoyl-CoA + H2O = hexadecanoate + CoA + H(+). It carries out the reaction S-hexadecanoyl-N-acetylcysteamine + H2O = N-acetylcysteamine + hexadecanoate + H(+). The enzyme catalyses S-hexadecanoyl-N-acetylcysteine methyl ester + H2O = N-acetylcysteine methyl ester + hexadecanoate + H(+). Palmitoylation reduces PPT1 enzymatic activity. Functionally, has thioesterase activity against fatty acid thioesters with 14 -18 carbons, including palmitoyl-CoA, S-palmitoyl-N-acetylcysteamine, and palmitoylated proteins. In contrast to PPT2, PPT1 can hydrolyze palmitoylated proteins and palmitoylcysteine. The protein is Palmitoyl-protein thioesterase 1 (PPT1) of Macaca fascicularis (Crab-eating macaque).